The sequence spans 739 residues: NAD(P)H-quinone oxidoreductase subunit 5, chloroplastic (739 aa).

A run of 16 helical transmembrane segments spans residues 9-29 (LIIP…LIFF), 40-60 (WAFP…NLSI), 89-109 (IDSL…LVLI), 125-145 (FAYM…SNLI), 147-167 (IHIF…FWFT), 185-205 (GDFG…SFEF), 224-244 (LFVI…SAQF), 258-278 (TPIS…FLVA), 283-303 (LFTV…ITIL), 327-347 (LGYI…FHLI), 354-374 (ALLF…VGYS), 396-416 (TAFF…CFWS), 425-445 (WLYS…TAFY), 546-566 (LFPL…GIPF), 605-625 (IFSV…YRPI), and 718-738 (ISSY…IFQV).

It belongs to the complex I subunit 5 family. In terms of assembly, NDH is composed of at least 16 different subunits, 5 of which are encoded in the nucleus.

Its subcellular location is the plastid. It localises to the chloroplast thylakoid membrane. The catalysed reaction is a plastoquinone + NADH + (n+1) H(+)(in) = a plastoquinol + NAD(+) + n H(+)(out). It carries out the reaction a plastoquinone + NADPH + (n+1) H(+)(in) = a plastoquinol + NADP(+) + n H(+)(out). Functionally, NDH shuttles electrons from NAD(P)H:plastoquinone, via FMN and iron-sulfur (Fe-S) centers, to quinones in the photosynthetic chain and possibly in a chloroplast respiratory chain. The immediate electron acceptor for the enzyme in this species is believed to be plastoquinone. Couples the redox reaction to proton translocation, and thus conserves the redox energy in a proton gradient. This Buxus microphylla (Littleleaf boxwood) protein is NAD(P)H-quinone oxidoreductase subunit 5, chloroplastic (ndhF).